A 406-amino-acid polypeptide reads, in one-letter code: Argininosuccinate synthase (406 aa).

ATP is bound by residues 11-19 (AYSGGLDTS) and Ala38. The L-citrulline site is built by Tyr91 and Ser96. Residue Gly121 coordinates ATP. L-aspartate contacts are provided by Thr123, Asn127, and Asp128. Asn127 is an L-citrulline binding site. Residues Arg131, Ser181, Ser190, Glu266, and Tyr278 each contribute to the L-citrulline site.

It belongs to the argininosuccinate synthase family. Type 1 subfamily. As to quaternary structure, homotetramer.

The protein resides in the cytoplasm. It carries out the reaction L-citrulline + L-aspartate + ATP = 2-(N(omega)-L-arginino)succinate + AMP + diphosphate + H(+). The protein operates within amino-acid biosynthesis; L-arginine biosynthesis; L-arginine from L-ornithine and carbamoyl phosphate: step 2/3. The sequence is that of Argininosuccinate synthase from Campylobacter hominis (strain ATCC BAA-381 / DSM 21671 / CCUG 45161 / LMG 19568 / NCTC 13146 / CH001A).